Consider the following 271-residue polypeptide: Phosphate import ATP-binding protein PstB (271 aa).

Residues 24–266 (MIGKDVSVYY…PDDQRTQDYI (243 aa)) enclose the ABC transporter domain. 56–63 (GPSGCGKS) is an ATP binding site.

The protein belongs to the ABC transporter superfamily. Phosphate importer (TC 3.A.1.7) family. As to quaternary structure, the complex is composed of two ATP-binding proteins (PstB), two transmembrane proteins (PstC and PstA) and a solute-binding protein (PstS).

Its subcellular location is the cell inner membrane. The catalysed reaction is phosphate(out) + ATP + H2O = ADP + 2 phosphate(in) + H(+). Part of the ABC transporter complex PstSACB involved in phosphate import. Responsible for energy coupling to the transport system. The sequence is that of Phosphate import ATP-binding protein PstB from Agrobacterium fabrum (strain C58 / ATCC 33970) (Agrobacterium tumefaciens (strain C58)).